A 330-amino-acid polypeptide reads, in one-letter code: Glycoprotein integral membrane protein 1 (330 aa).

Residues 1–23 form the signal peptide; that stretch reads MEGAPLGPLALRLLLFVALPASG. The Extracellular segment spans residues 24–268; the sequence is WLTTGAPEPP…VFPVFFQFLN (245 aa). N-linked (GlcNAc...) asparagine glycans are attached at residues Asn46, Asn64, Asn166, and Asn191. Residues 269–289 traverse the membrane as a helical segment; it reads IMVVGITGAAVVITILKVLFP. The Cytoplasmic portion of the chain corresponds to 290–330; that stretch reads VSEYKGILQLDKVDVIPVTAINLYPDGPEKTAENLEDKTCI.

The protein localises to the membrane. This chain is Glycoprotein integral membrane protein 1 (GINM1), found in Pongo abelii (Sumatran orangutan).